Consider the following 1059-residue polypeptide: DNA (cytosine-5)-methyltransferase CMT1 (1059 aa).

2 disordered regions span residues 1–196 (MVPE…GALA) and 230–272 (CVGE…DEAR). The span at 29–41 (AEAEAVADLDEID) shows a compositional bias: acidic residues. 3 stretches are compositionally biased toward basic and acidic residues: residues 42–79 (REMS…EKAA), 92–129 (REMP…EKAA), and 147–157 (SRGKRQRGVEK). Over residues 158–167 (VKRRTRKKTA) the composition is skewed to basic residues. Residues 252–262 (RRVEDSDDHFV) are compositionally biased toward basic and acidic residues. One can recognise a BAH domain in the interval 312–436 (EIYHLDDDVY…VAYSTFANLP (125 aa)). The 539-residue stretch at 479–1017 (ASLLDLYSGC…YALGLAYRGE (539 aa)) folds into the SAM-dependent MTase C5-type domain. The Chromo domain maps to 584–649 (FDVEELLEIC…KGHKENILPL (66 aa)). Cysteine 662 is a catalytic residue.

Belongs to the class I-like SAM-binding methyltransferase superfamily. C5-methyltransferase family.

It localises to the nucleus. The enzyme catalyses a 2'-deoxycytidine in DNA + S-adenosyl-L-methionine = a 5-methyl-2'-deoxycytidine in DNA + S-adenosyl-L-homocysteine + H(+). In terms of biological role, involved in CpXpG DNA methylation. May not play a major role in maintaining CpXpG methylation. This chain is DNA (cytosine-5)-methyltransferase CMT1, found in Oryza sativa subsp. japonica (Rice).